The following is a 110-amino-acid chain: Defensin-like protein 296 (110 aa).

Residues 1–28 (MASKITIFFVLALVVVCTMMVCIPTATA) form the signal peptide. 6 disulfide bridges follow: Cys-34–Cys-52, Cys-40–Cys-57, Cys-45–Cys-59, Cys-81–Cys-102, Cys-87–Cys-107, and Cys-95–Cys-109.

The protein belongs to the DEFL family.

The protein localises to the secreted. In Arabidopsis thaliana (Mouse-ear cress), this protein is Defensin-like protein 296.